The following is a 463-amino-acid chain: FAD-dependent monooxygenase nodM (463 aa).

Residues 5–25 (EFKVIIVGGSLAGLTLAHCLL) form a helical membrane-spanning segment. FAD is bound by residues glutamate 35, glycine 49, arginine 108, aspartate 305, and alanine 318. The helical transmembrane segment at 438–458 (ILLGFTGVFTSALAMVVLLHI) threads the bilayer.

The protein belongs to the paxM FAD-dependent monooxygenase family. It depends on FAD as a cofactor.

The protein resides in the membrane. Its pathway is secondary metabolite biosynthesis. Its function is as follows. FAD-dependent monooxygenase; part of the gene cluster that mediates the biosynthesis of the indole diterpenes nodulisporic acids (NA). Nodulisporic acid A (NAA) and its chemically modified derivatives are of particular significance because of their highly potent insecticidal activity against blood-feeding arthropods and lack of observable adverse effects on mammals, in particular the tremogenicity associated with the paspaline-derived IDTs is not observed. The geranylgeranyl diphosphate (GGPP) synthase ggs1, localized outside of the cluster, is proposed to catalyze the first step in nodulisporic acid biosynthesis via conversion of farnesyl pyrophosphate and isopentyl pyrophosphate into geranylgeranyl pyrophosphate (GGPP). Condensation of indole-3-glycerol phosphate with GGPP by the prenyl transferase nodC then forms 3-geranylgeranylindole (3-GGI). Epoxidation by the FAD-dependent monooxygenase nodM leads to a single-epoxidized-GGI that is substrate of the terpene cyclase nodB for cyclization to yield emindole SB. The terminal methyl carbon, C28, of emindole SB is then oxidized by the cytochrome P450 monooxygenase nodW to produce nodulisporic acid F (NAF), the pentacyclic core of NAA. NAF is converted to nodulisporic acid E (NAE) via prenylation. This step is probably performed by one of the indole diterpene prenyltransferases nodD1 or nodD2. Several oxidation steps performed by the FAD-linked oxidoreductase nodO and one of the cytochrome P450 monooxygenase nodR, nodX or nodZ further convert NAE to nodulisporic acid D (NAD). NAD is substrate of cytochrome P450 monooxygenase nodJ to produce the precursor of nodulisporic acid C (NAC), converted to NAC by one of the indole diterpene prenyltransferases nodD1 or nodD2. The FAD-dependent monooxygenase nodY2 then oxidizes NAC to nodulisporic acid B (NAB). Finally NAB is converted to NAA by one of the cytochrome P450 monooxygenases nodR, nodX or nodZ. The sequence is that of FAD-dependent monooxygenase nodM from Hypoxylon pulicicidum.